Consider the following 845-residue polypeptide: Synaptonemal complex protein 1 (845 aa).

The tract at residues 59–215 (ETRQVYVDLN…YQLTEEKEAQ (157 aa)) is interaction with SYCE3. Coiled-coil stretches lie at residues 64–211 (YVDL…LTEE) and 244–544 (LRTE…EIEV). The required for pH-induced assembly of C-terminal ends into antiparallel tetramers stretch occupies residues 550–644 (EKLLGEVEKA…VSLKKQLEIE (95 aa)). The Nuclear localization signal signature appears at 553–556 (LGEV). Residues 620–663 (KTALETELSNIRNELVSLKKQLEIEREEKEKLKLEKENTAILKD) are a coiled coil. The segment at 657–845 (NTAILKDKKD…RLKEAEKLFA (189 aa)) is DNA-binding. A Phosphoserine modification is found at S676. Residues 684–703 (FDSKTTPSQNISRISSSMES) show a composition bias toward polar residues. The interval 684-709 (FDSKTTPSQNISRISSSMESGKTKDN) is disordered. The Nuclear localization signal motif lies at 753-756 (KKRK). Residues 786–808 (LYNNNSPNSHLTPKQTPLSLSTP) form a disordered region.

As to quaternary structure, structural component of synaptonemal complexes. Homotetramer that consists of an N-terminal four-helical bundle that bifurcates into two elongated C-terminal dimeric coiled coils. This tetrameric building block potentially self-assembles into a supramolecular zipper-like lattice to mediate meiotic chromosome synapsis. Self-assembly is likely initiated by local proton density at chromosome axis, which is predicted to trigger antiparallel back to back assembly of adjacent C-terminal ends into tetrameric structures that anchor to chromosomal DNA. Then the N-terminal ends are predicted to undergo cooperative antiparallel head to head assembly at the midline of synaptonemal complexes central element to form a zipper-like lattice between properly aligned homologous chromosomes. The nascent synapsis generated by SYCP1 is stabilized through interaction with central element proteins SYCE1 and SYCE2. Interacts (via tetrameric core) with SYCE3; the interaction remodels SYCP1 homotetramers to 2:1 heterotrimers with SYCE3. SYCP1/SYCE3 heterotrimers form lattice assemblies as part of the mature synaptonemal complex via both lateral and head-to-head interactions. Forms a complex with EWSR1, PRDM9, SYCP3 and REC8; complex formation is dependent of phosphorylated form of REC8 and requires PRDM9 bound to hotspot DNA; EWSR1 joins PRDM9 with the chromosomal axis through REC8. Interacts with SPO16.

It localises to the nucleus. Its subcellular location is the chromosome. The protein resides in the centromere. Major component of the transverse filaments of synaptonemal complexes, formed between homologous chromosomes during meiotic prophase. Required for normal assembly of the central element of the synaptonemal complexes. Required for normal centromere pairing during meiosis. Required for normal meiotic chromosome synapsis during oocyte and spermatocyte development and for normal male and female fertility. In Mesocricetus auratus (Golden hamster), this protein is Synaptonemal complex protein 1.